Here is a 341-residue protein sequence, read N- to C-terminus: Phenylalanine--tRNA ligase alpha subunit (341 aa).

Glu-259 contacts Mg(2+).

The protein belongs to the class-II aminoacyl-tRNA synthetase family. Phe-tRNA synthetase alpha subunit type 1 subfamily. As to quaternary structure, tetramer of two alpha and two beta subunits. Mg(2+) serves as cofactor.

It localises to the cytoplasm. The enzyme catalyses tRNA(Phe) + L-phenylalanine + ATP = L-phenylalanyl-tRNA(Phe) + AMP + diphosphate + H(+). In Mycobacterium tuberculosis (strain ATCC 25177 / H37Ra), this protein is Phenylalanine--tRNA ligase alpha subunit.